Consider the following 212-residue polypeptide: Peptide methionine sulfoxide reductase MsrA (212 aa).

Residue C52 is part of the active site.

It belongs to the MsrA Met sulfoxide reductase family.

The enzyme catalyses L-methionyl-[protein] + [thioredoxin]-disulfide + H2O = L-methionyl-(S)-S-oxide-[protein] + [thioredoxin]-dithiol. It carries out the reaction [thioredoxin]-disulfide + L-methionine + H2O = L-methionine (S)-S-oxide + [thioredoxin]-dithiol. In terms of biological role, has an important function as a repair enzyme for proteins that have been inactivated by oxidation. Catalyzes the reversible oxidation-reduction of methionine sulfoxide in proteins to methionine. The protein is Peptide methionine sulfoxide reductase MsrA of Salmonella agona (strain SL483).